A 1456-amino-acid polypeptide reads, in one-letter code: Retrovirus-related Pol polyprotein from transposon RE2 (1456 aa).

The tract at residues 205–252 is disordered; sequence NVVTHRNTNTNRNQNNRGDNRNYNNNNNRSNSWQPSSSGSRSDNRQPK. Residues 210 to 245 are compositionally biased toward low complexity; the sequence is RNTNTNRNQNNRGDNRNYNNNNNRSNSWQPSSSGSR. The segment at 257 to 273 adopts a CCHC-type zinc-finger fold; it reads RCQICSVQGHSAKRCPQ. Positions 276 to 291 are enriched in low complexity; the sequence is QFQSTTNQQQSTSPFT. The segment at 276–295 is disordered; it reads QFQSTTNQQQSTSPFTPWQP. Asp313 acts as the For protease activity in catalysis. Positions 498 to 661 constitute an Integrase catalytic domain; the sequence is TSSKPLEYIY…SPFQKLFGQP (164 aa). The Mg(2+) site is built by Asp509 and Asp571. A compositionally biased stretch (polar residues) spans 738 to 754; it reads STSQEQRSDSAPNWPSH. A disordered region spans residues 738–896; sequence STSQEQRSDS…PPLPPVLPAP (159 aa). The segment covering 793–814 has biased composition (low complexity); it reads SSSNLPSSSISSPSSSEPTAPS. Residues 816–827 show a composition bias toward polar residues; the sequence is NGPQPTAQPHQT. Composition is skewed to low complexity over residues 828-841 and 849-886; these read QNSNSNSPILNNPN and SPNQNSPLPQSPISSPHIPTPSTSISEPNSPSSSSTST. Positions 887–896 are enriched in pro residues; it reads PPLPPVLPAP. Residues 965–1208 enclose the Reverse transcriptase Ty1/copia-type domain; the sequence is NHTWDLVPPP…LTAKPVATPM (244 aa).

The enzyme catalyses DNA(n) + a 2'-deoxyribonucleoside 5'-triphosphate = DNA(n+1) + diphosphate. The protein is Retrovirus-related Pol polyprotein from transposon RE2 (RE2) of Arabidopsis thaliana (Mouse-ear cress).